Reading from the N-terminus, the 614-residue chain is Zinc metalloproteinase-disintegrin-like BmMP (614 aa).

An N-terminal signal peptide occupies residues 1–20; the sequence is MIQALLVTICLAVFPYQGSS. Positions 21–188 are excised as a propeptide; it reads IILESGNVND…WESDEPIRNA (168 aa). N-linked (GlcNAc...) asparagine glycosylation is present at asparagine 187. A Peptidase M12B domain is found at 205 to 401; the sequence is KYIEFYVAVD…DRPQCILNKP (197 aa). Disulfide bonds link cysteine 316–cysteine 396, cysteine 356–cysteine 380, cysteine 359–cysteine 364, cysteine 412–cysteine 441, cysteine 423–cysteine 436, cysteine 425–cysteine 431, cysteine 435–cysteine 458, cysteine 449–cysteine 455, cysteine 454–cysteine 480, cysteine 467–cysteine 487, cysteine 474–cysteine 506, cysteine 499–cysteine 511, cysteine 518–cysteine 568, cysteine 533–cysteine 576, cysteine 546–cysteine 556, cysteine 563–cysteine 602, and cysteine 596–cysteine 607. Residue histidine 341 participates in Zn(2+) binding. Glutamate 342 is an active-site residue. Zn(2+) is bound by residues histidine 345 and histidine 351. Positions 409–495 constitute a Disintegrin domain; that stretch reads PAICGNYFVE…ECPTDIFRRN (87 aa). The D/ECD-tripeptide motif lies at 473–475; the sequence is DCD.

Belongs to the venom metalloproteinase (M12B) family. P-III subfamily. P-IIIa sub-subfamily. In terms of assembly, monomer. It depends on Zn(2+) as a cofactor. As to expression, expressed by the venom gland.

It is found in the secreted. In terms of biological role, snake venom zinc metalloproteinase that inhibits platelet aggregation and degrades fibrinogen. In Bungarus multicinctus (Many-banded krait), this protein is Zinc metalloproteinase-disintegrin-like BmMP.